A 644-amino-acid chain; its full sequence is Exoribonuclease 2 (644 aa).

An RNB domain is found at 189-516 (RQDLTALNFV…NHRLLKAVIK (328 aa)). One can recognise an S1 motif domain in the interval 561–643 (NTRFAAEIID…ETRSIIARPA (83 aa)).

It belongs to the RNR ribonuclease family. RNase II subfamily.

The protein resides in the cytoplasm. The enzyme catalyses Exonucleolytic cleavage in the 3'- to 5'-direction to yield nucleoside 5'-phosphates.. Involved in mRNA degradation. Hydrolyzes single-stranded polyribonucleotides processively in the 3' to 5' direction. This Salmonella agona (strain SL483) protein is Exoribonuclease 2.